Reading from the N-terminus, the 294-residue chain is MKKLLLIITVFFTCSAVAETSNIVALVNNEPITLNEFRARKKMIMALNNVEEVTPAQNKQLSDIAIKSLIDESLLFQYYGDKEISQEEIDNAIKSIEDRNKMPHGSLLQYLKSRSVNPDSFISQIKSELIKMNVLSGLSRSVQVSNKEIDVAILSSDQKEVEVSMQIFTSKDKSDKTFAQMNNLKSKLKNCSDVKKSLYENFATMTVITDKLSKIEEAKQTIVKDLNPNQTSNVFEKYNEFEIVQVCTKKILNISEDENNYVVNFLTNKKISQKAQKFFEDMHKKAYIKITLPS.

Residues 1-18 form the signal peptide; it reads MKKLLLIITVFFTCSAVA.

This is an uncharacterized protein from Rickettsia bellii (strain RML369-C).